A 511-amino-acid chain; its full sequence is TNF receptor-associated factor family protein DDB_G0290931 (511 aa).

An RING-type; degenerate zinc finger spans residues 27 to 67 (CPICFELIYKKSIYQCSSGHYACQECWEKSLEIKQECMICR). Positions 103 to 169 (IDGANQENED…RKLIKDEENG (67 aa)) form a coiled coil. A disordered region spans residues 107–159 (NQENEDEENEDEENEDDEDENEDEENGEDDEDKDEDEENENENEENKDEENEK). Positions 109–155 (ENEDEENEDEENEDDEDENEDEENGEDDEDKDEDEENENENEENKDE) are enriched in acidic residues. 2 consecutive TRAF-type zinc fingers follow at residues 181–234 (RHIQ…QVQL) and 236–293 (NHYD…SELQ). A coiled-coil region spans residues 324-358 (ELLLKEIEKSKITCSELQRKNDELSSLITEIDDNY). An MATH domain is found at 374-499 (GYTNKWIISN…DDKLTINIYV (126 aa)).

Belongs to the TNF receptor-associated factor family. A subfamily.

The protein localises to the cytoplasm. Probable adapter protein and signal transducer that links members of the tumor necrosis factor receptor family to different signaling pathways by association with the receptor cytoplasmic domain and kinases. The polypeptide is TNF receptor-associated factor family protein DDB_G0290931 (Dictyostelium discoideum (Social amoeba)).